Consider the following 76-residue polypeptide: MQLVLAGKYIGAGLASIGLVGAGIGIAIVFAALINGVSRNPALKGQLFTYSILGFALSEATGLFALMIAFLLLYAV.

At Met-1 the chain carries N-formylmethionine. 2 consecutive transmembrane segments (helical) span residues 14–34 (LASI…AALI) and 52–72 (ILGF…AFLL).

As to quaternary structure, F-type ATP synthases have 2 components, the catalytic core F(1) and the membrane-embedded component F(0), linked together by a central stalk and a peripheral stalk. The central stalk, also called rotor shaft, is often seen as part of F(1). The peripheral stalk is seen as part of F(0). F(0) contains the membrane channel next to the rotor. F-type ATP synthases form dimers but each monomer functions independently in ATP generation. The dimer consists of 17 different polypeptides: ATP1 (subunit alpha, 3 molecules per monomer, part of F(1)), ATP2 (subunit beta, 3 copies per monomer, part of F(1)), ATP3 (subunit gamma, part of the central stalk), ATP4 (subunit b, part of the peripheral stalk), ATP5/OSCP (subunit 5/OSCP, part of the peripheral stalk), ATP6 (subunit a, part of the peripheral stalk), ATP7 (subunit d, part of the peripheral stalk), ATP8 (subunit 8, part of the peripheral stalk), OLI1 (subunit c, part of the rotor, 10 molecules per monomer), ATP14 (subunit h, part of the peripheral stalk), ATP15 (subunit epsilon, part of the central stalk), ATP16 (subunit delta, part of the central stalk), ATP17 (subunit f, part of the peripheral stalk), ATP18 (subunit i/j, part of the peripheral stalk), ATP19 (subunit k, dimer-specific, at interface between monomers), ATP20 (subunit g, at interface between monomers), TIM11 (subunit e, at interface between monomers).

Its subcellular location is the mitochondrion inner membrane. Mitochondrial membrane ATP synthase (F(1)F(0) ATP synthase or Complex V) produces ATP from ADP in the presence of a proton gradient across the membrane which is generated by electron transport complexes of the respiratory chain. F-type ATP synthases consist of two structural domains, F(1) - containing the extramembraneous catalytic core, and F(0) - containing the membrane proton channel, linked together by a central stalk and a peripheral stalk. During catalysis, ATP synthesis in the catalytic domain of F(1) is coupled via a rotary mechanism of the central stalk subunits to proton translocation. Part of the complex F(0) domain. A homomeric c-ring of 10 OLI1/ATP9 subunits is part of the complex rotary element. This Yarrowia lipolytica (strain CLIB 122 / E 150) (Yeast) protein is ATP synthase subunit 9, mitochondrial.